Here is an 84-residue protein sequence, read N- to C-terminus: Small ribosomal subunit protein bS20 (84 aa).

This sequence belongs to the bacterial ribosomal protein bS20 family.

Binds directly to 16S ribosomal RNA. The protein is Small ribosomal subunit protein bS20 of Lactiplantibacillus plantarum (strain ATCC BAA-793 / NCIMB 8826 / WCFS1) (Lactobacillus plantarum).